The primary structure comprises 816 residues: Acyl-homoserine lactone acylase QuiP (816 aa).

Residues 1-33 (MASPALSHFLPRFGVAAAVAGVLSLTGCQTWNA) form the signal peptide. Residue serine 262 is the Nucleophile of the active site.

The protein belongs to the peptidase S45 family. In terms of assembly, heterodimer of an alpha subunit and a beta subunit processed from the same precursor.

Its subcellular location is the periplasm. The catalysed reaction is an N-acyl-L-homoserine lactone + H2O = L-homoserine lactone + a carboxylate. Its function is as follows. Catalyzes the deacylation of acyl-homoserine lactone (AHL or acyl-HSL), releasing homoserine lactone (HSL) and the corresponding fatty acid. Possesses a specificity for the degradation of long-chain acyl-HSLs (side chains of seven or more carbons in length). This Pseudomonas fluorescens (strain Pf0-1) protein is Acyl-homoserine lactone acylase QuiP (quiP).